The chain runs to 430 residues: MVQTIDQAASLRGTVSLPADKSISHRSALLSALGTGRSRVYNFPDSADPQSTLDCVRTLGIEAGRNDEGVLAIHGRGLGGLHPPSEPLDCGNSGTTMRLLSGMMAGQEFGSVLTGDESLQQRPMERIADPLQAMGARIDLRSGHAPIRIRPQRSDGLRPLEYRLPVASAQVKSCVLLAGLYASGRTVVIETTPSRDHTERMLGLEVQEVGGERHIIVEEDHTVPAVDWSVPGDFSGAAFFLVAGTLVPDSELHLDDVGLNPSRTALLDVLDGMGADITVENERVQGSEPVGDITVRSASLSGIDIGGRLIPNLIDEIPVIAVAAACAEGRTEIRDAEELRVKETDRLHAMAQNLEALGAKVQEREDGLIIDGNGPNLLGAAVTSHDDHRIAMAMGVAGLVAHGTTTISDAECARVSFPGFWDELSRVSVS.

Residues K21, S22, and R26 each contribute to the 3-phosphoshikimate site. Residue K21 participates in phosphoenolpyruvate binding. G94 and R122 together coordinate phosphoenolpyruvate. Positions 168, 170, 315, and 342 each coordinate 3-phosphoshikimate. Residue Q170 coordinates phosphoenolpyruvate. D315 (proton acceptor) is an active-site residue. Phosphoenolpyruvate is bound by residues R346 and R389.

Belongs to the EPSP synthase family. Monomer.

The protein localises to the cytoplasm. The catalysed reaction is 3-phosphoshikimate + phosphoenolpyruvate = 5-O-(1-carboxyvinyl)-3-phosphoshikimate + phosphate. The protein operates within metabolic intermediate biosynthesis; chorismate biosynthesis; chorismate from D-erythrose 4-phosphate and phosphoenolpyruvate: step 6/7. In terms of biological role, catalyzes the transfer of the enolpyruvyl moiety of phosphoenolpyruvate (PEP) to the 5-hydroxyl of shikimate-3-phosphate (S3P) to produce enolpyruvyl shikimate-3-phosphate and inorganic phosphate. This chain is 3-phosphoshikimate 1-carboxyvinyltransferase, found in Salinibacter ruber (strain DSM 13855 / M31).